Reading from the N-terminus, the 272-residue chain is Undecaprenyl-diphosphatase (272 aa).

Transmembrane regions (helical) follow at residues 1-21 (MSTL…FLPI), 39-59 (QGLA…MMYF), 91-111 (WWIL…KDFI), 117-137 (SALV…FADI), 151-171 (LGLK…IPGT), 196-216 (FLLS…KLIL), 228-248 (LGSL…LILL), and 251-271 (LGMM…LWFI).

It belongs to the UppP family.

The protein resides in the cell inner membrane. It carries out the reaction di-trans,octa-cis-undecaprenyl diphosphate + H2O = di-trans,octa-cis-undecaprenyl phosphate + phosphate + H(+). Functionally, catalyzes the dephosphorylation of undecaprenyl diphosphate (UPP). Confers resistance to bacitracin. The chain is Undecaprenyl-diphosphatase from Colwellia psychrerythraea (strain 34H / ATCC BAA-681) (Vibrio psychroerythus).